The sequence spans 184 residues: Photosystem I assembly protein Ycf3 (184 aa).

TPR repeat units lie at residues 31–64 (AFAYYKAGMAAQAEGDYAEALENYYESLYLDEDQ), 68–101 (SYTLYNIGLIYAKNENYPRALEYYHQAVSLNSNL), and 131–164 (MEISEEYEYIELAKGLFDKAAEYWYQALKLAPDN).

It belongs to the Ycf3 family.

The protein resides in the plastid. Its subcellular location is the chloroplast thylakoid membrane. In terms of biological role, essential for the assembly of the photosystem I (PSI) complex. May act as a chaperone-like factor to guide the assembly of the PSI subunits. In Thalassiosira pseudonana (Marine diatom), this protein is Photosystem I assembly protein Ycf3.